The following is a 427-amino-acid chain: Serine--tRNA ligase (427 aa).

232–234 (TAE) is an L-serine binding site. ATP is bound at residue 263–265 (RSE). Glutamate 286 provides a ligand contact to L-serine. 350-353 (EISS) provides a ligand contact to ATP. L-serine is bound at residue serine 385.

Belongs to the class-II aminoacyl-tRNA synthetase family. Type-1 seryl-tRNA synthetase subfamily. In terms of assembly, homodimer. The tRNA molecule binds across the dimer.

Its subcellular location is the cytoplasm. It catalyses the reaction tRNA(Ser) + L-serine + ATP = L-seryl-tRNA(Ser) + AMP + diphosphate + H(+). The catalysed reaction is tRNA(Sec) + L-serine + ATP = L-seryl-tRNA(Sec) + AMP + diphosphate + H(+). It participates in aminoacyl-tRNA biosynthesis; selenocysteinyl-tRNA(Sec) biosynthesis; L-seryl-tRNA(Sec) from L-serine and tRNA(Sec): step 1/1. Functionally, catalyzes the attachment of serine to tRNA(Ser). Is also able to aminoacylate tRNA(Sec) with serine, to form the misacylated tRNA L-seryl-tRNA(Sec), which will be further converted into selenocysteinyl-tRNA(Sec). This is Serine--tRNA ligase from Lacticaseibacillus paracasei (strain ATCC 334 / BCRC 17002 / CCUG 31169 / CIP 107868 / KCTC 3260 / NRRL B-441) (Lactobacillus paracasei).